The chain runs to 393 residues: UDP-galactose translocator (393 aa).

10 helical membrane passes run 3–23 (AVGS…AGAL), 37–57 (YISL…IRYA), 65–85 (FFAT…CLLL), 97–117 (LVLF…KLAV), 140–160 (TFQV…VLML), 169–189 (WASL…QAGG), 200–220 (GVGL…GVYF), 238–258 (LGLF…GTAV), 269–289 (PAVW…AVVV), and 315–335 (LFGF…IGAV). Residues 353-393 (APTSGPCTHQQPPGQPPPPQLSSHHGDLSTEPFLPKSVLVK) form a disordered region.

Belongs to the nucleotide-sugar transporter family. SLC35A subfamily. Interacts with SLC35A3; the interaction is reduced in the presence of SLC35A4. Found in a complex with SLC35A3 and SLC35A4.

The protein localises to the golgi apparatus membrane. The catalysed reaction is UMP(out) + UDP-alpha-D-galactose(in) = UMP(in) + UDP-alpha-D-galactose(out). It carries out the reaction UDP-N-acetyl-alpha-D-galactosamine(in) + UMP(out) = UDP-N-acetyl-alpha-D-galactosamine(out) + UMP(in). It catalyses the reaction UMP(out) + UDP-alpha-D-glucose(in) = UMP(in) + UDP-alpha-D-glucose(out). The enzyme catalyses UMP(out) + UDP-N-acetyl-alpha-D-glucosamine(in) = UMP(in) + UDP-N-acetyl-alpha-D-glucosamine(out). The catalysed reaction is UDP-alpha-D-galactose(in) + AMP(out) = UDP-alpha-D-galactose(out) + AMP(in). It carries out the reaction UDP-alpha-D-galactose(in) + CMP(out) = UDP-alpha-D-galactose(out) + CMP(in). It catalyses the reaction UDP-N-acetyl-alpha-D-galactosamine(out) + UDP-alpha-D-galactose(in) = UDP-N-acetyl-alpha-D-galactosamine(in) + UDP-alpha-D-galactose(out). The enzyme catalyses UDP-N-acetyl-alpha-D-glucosamine(out) + UDP-alpha-D-galactose(in) = UDP-N-acetyl-alpha-D-glucosamine(in) + UDP-alpha-D-galactose(out). The catalysed reaction is UDP-alpha-D-galactose(in) + UDP-alpha-D-glucose(out) = UDP-alpha-D-galactose(out) + UDP-alpha-D-glucose(in). It carries out the reaction UMP(out) + CMP(in) = UMP(in) + CMP(out). It catalyses the reaction UMP(out) + AMP(in) = UMP(in) + AMP(out). In terms of biological role, transports uridine diphosphate galactose (UDP-galactose) from the cytosol into the Golgi apparatus, functioning as an antiporter that exchanges UDP-galactose for UMP. It is also able to exchange UDP-galactose for AMP and CMP, and to transport UDP-N-acetylgalactosamine (UDP-GalNAc) and other nucleotide sugars. As a provider of UDP-galactose to galactosyltransferases present in the Golgi apparatus, it is necessary for globotriaosylceramide/globoside (Gb3Cer) synthesis from lactosylceramide. In Bos taurus (Bovine), this protein is UDP-galactose translocator.